Consider the following 70-residue polypeptide: Large ribosomal subunit protein bL31 (70 aa).

Residues cysteine 16, cysteine 18, cysteine 38, and cysteine 41 each contribute to the Zn(2+) site.

This sequence belongs to the bacterial ribosomal protein bL31 family. Type A subfamily. Part of the 50S ribosomal subunit. It depends on Zn(2+) as a cofactor.

Binds the 23S rRNA. The protein is Large ribosomal subunit protein bL31 of Bifidobacterium adolescentis (strain ATCC 15703 / DSM 20083 / NCTC 11814 / E194a).